The sequence spans 310 residues: 2-dehydropantoate 2-reductase (310 aa).

Residues 9 to 14 and asparagine 100 each bind NADP(+); that span reads GVGAIG. Asparagine 100 serves as a coordination point for substrate. Lysine 184 acts as the Proton donor in catalysis. Asparagine 188, asparagine 192, and serine 259 together coordinate substrate. Glutamate 270 is an NADP(+) binding site.

The protein belongs to the ketopantoate reductase family.

Its subcellular location is the cytoplasm. The enzyme catalyses (R)-pantoate + NADP(+) = 2-dehydropantoate + NADPH + H(+). The protein operates within cofactor biosynthesis; (R)-pantothenate biosynthesis; (R)-pantoate from 3-methyl-2-oxobutanoate: step 2/2. Functionally, catalyzes the NADPH-dependent reduction of ketopantoate into pantoic acid. This chain is 2-dehydropantoate 2-reductase, found in Aquifex aeolicus (strain VF5).